The chain runs to 588 residues: MGVNAVHWFRKGLRLHDNPALKECIQGADTIRCVYILDPWFAGSSNVGINRWRFLLQCLEDLDANLRKLNSRLFVIRGQPADVFPRLFKEWNITKLSIEYDSEPFGKERDAAIKKLATEAGVEVIVRISHTLYDLDKIIELNGGQPPLTYKRFQTLVSKMEPLEMPADTITSDVIGKCTTPLSDDHDEKYGVPSLEELGFDTDGLSSAVWPGGETEALTRLERHLERKAWVANFERPRMNANSLLASPTGLSPYLRFGCLSCRLFYFKLTDLYKKVKKNSSPPLSLYGQLLWREFFYTAATNNPRFDKMEGNPICVQIPWDKNPEALAKWAEGRTGFPWIDAIMTQLRQEGWIHHLARHAVACFLTRGDLWISWEEGMKVFEELLLDADWSINAGSWMWLSCSSFFQQFFHCYCPVGFGRRTDPNGDYIRRYLPVLRGFPAKYIYDPWNAPEGIQKVAKCLIGVNYPKPMVNHAEASRLNIERMKQIYQQLSRYRGLGLLASVPSNPNGNGGLMGYAPGENVPSGGSGGGNCSQGSGILHYAHGDSQQTNPLKQGRSSMGTGLSSGKRPSQEEDAQSVGPKVQRQSSN.

The Photolyase/cryptochrome alpha/beta domain occupies 3 to 132 (VNAVHWFRKG…EVIVRISHTL (130 aa)). Lys-11 participates in a covalent cross-link: Glycyl lysine isopeptide (Lys-Gly) (interchain with G-Cter in ubiquitin). The short motif at 50–54 (NRWRF) is the LIR 1 element. Ser-71 is modified (phosphoserine; by AMPK). An LIR 2 motif is present at residues 82–87 (DVFPRL). Lys-107 is covalently cross-linked (Glycyl lysine isopeptide (Lys-Gly) (interchain with G-Cter in ubiquitin)). An LIR 3 motif is present at residues 151–156 (KRFQTL). Lys-159 is covalently cross-linked (Glycyl lysine isopeptide (Lys-Gly) (interchain with G-Cter in ubiquitin)). Phosphoserine; by MAPK is present on Ser-247. Ser-252 serves as a coordination point for FAD. Short sequence motifs (LIR) lie at residues 255–260 (LRFGCL) and 271–276 (DLYKKV). Ser-280 is subject to Phosphoserine; by AMPK. Positions 285–290 (SLYGQL) match the LIR 6 motif. FAD is bound at residue Gln-289. Lys-329 is covalently cross-linked (Glycyl lysine isopeptide (Lys-Gly) (interchain with G-Cter in ubiquitin)). The short motif at 335-339 (TGFPW) is the LIR 7 element. Residue His-355 coordinates FAD. A required for inhibition of CLOCK-BMAL1-mediated transcription region spans residues 371–470 (WISWEEGMKV…LIGVNYPKPM (100 aa)). The LIR 8 motif lies at 379–384 (KVFEEL). Residue 387-389 (DAD) coordinates FAD. Short sequence motifs (LIR) lie at residues 395–400 (GSWMWL), 411–416 (HCYCPV), and 430–435 (RRYLPV). The tract at residues 471–493 (VNHAEASRLNIERMKQIYQQLSR) is interaction with TIMELESS. Lys-485 participates in a covalent cross-link: Glycyl lysine isopeptide (Lys-Gly) (interchain with G-Cter in ubiquitin). 2 short sequence motifs (LIR) span residues 486–491 (QIYQQL) and 492–497 (SRYRGL). The segment at 511-588 (GGLMGYAPGE…GPKVQRQSSN (78 aa)) is disordered. Residues 545–568 (DSQQTNPLKQGRSSMGTGLSSGKR) are compositionally biased toward polar residues. Lys-567 is covalently cross-linked (Glycyl lysine isopeptide (Lys-Gly) (interchain with G-Cter in ubiquitin)). Residue Ser-570 is modified to Phosphoserine.

Belongs to the DNA photolyase class-1 family. Component of the circadian core oscillator, which includes the CRY proteins, CLOCK or NPAS2, BMAL1 or BMAL2, CSNK1D and/or CSNK1E, TIMELESS, and the PER proteins. Interacts directly with TIMELESS. Interacts directly with PER1, PER2 and PER3; interaction with PER2 inhibits its ubiquitination and vice versa. Interacts with FBXL21. Interacts with FBXL3. Interacts with CLOCK-BMAL1 independently of PER2 and DNA. Interacts with HDAC1, HDAC2 and SIN3B. Interacts with nuclear receptors AR, NR1D1, NR3C1/GR, RORA and RORC; the interaction with at least NR3C1/GR is ligand dependent. Interacts with PRKDC. Interacts with the G protein subunit alpha GNAS; the interaction may block GPCR-mediated regulation of cAMP concentrations. Interacts with PRMT5. Interacts with EZH2. Interacts with MYBBP1A, DOCK7, HNRNPU, RPL7A, RPL8 and RPS3. Interacts with PPP5C (via TPR repeats). Interacts with MAP1LC3B. Interacts with CLOCK. Interacts with BMAL1. Interacts weakly with HDAC3; this interaction is enhanced in the presence of FBXL3. Interacts with TRIM28, KCTD5 and DDB1. Interacts with FOXO1. Interacts with DTL and DDB1-CUL4A complex. Interacts with HNF4A. Interacts with PSMD2 in a KDM8-dependent manner. Interacts with KDM8 in a FBXL3-dependent manner. Interacts with PPARG in a ligand-dependent manner. Interacts with PPARD (via domain NR LBD) and NR1I2 (via domain NR LBD) in a ligand-dependent manner. Interacts with PPARA, NR1I3 and VDR. FAD is required as a cofactor. Requires (6R)-5,10-methylene-5,6,7,8-tetrahydrofolate as cofactor. Post-translationally, phosphorylation on Ser-247 by MAPK is important for the inhibition of CLOCK-BMAL1-mediated transcriptional activity. Phosphorylation by CSNK1E requires interaction with PER1 or PER2. Phosphorylation at Ser-71 and Ser-280 by AMPK decreases protein stability. Phosphorylation at Ser-570 exhibits a robust circadian rhythm with a peak at CT8, increases protein stability, prevents SCF(FBXL3)-mediated degradation and is antagonized by interaction with PRKDC. In terms of processing, ubiquitinated by the SCF(FBXL3) and SCF(FBXL21) complexes, regulating the balance between degradation and stabilization. The SCF(FBXL3) complex is mainly nuclear and mediates ubiquitination and subsequent degradation of CRY1. In contrast, cytoplasmic SCF(FBXL21) complex-mediated ubiquitination leads to stabilize CRY1 and counteract the activity of the SCF(FBXL3) complex. The SCF(FBXL3) and SCF(FBXL21) complexes probably mediate ubiquitination at different Lys residues. Ubiquitination at Lys-11 and Lys-107 are specifically ubiquitinated by the SCF(FBXL21) complex but not by the SCF(FBXL3) complex. Ubiquitination may be inhibited by PER2. Deubiquitinated by USP7. Undergoes autophagy-mediated degradation in the liver in a time-dependent manner. Autophagic degradation of CRY1 (an inhibitor of gluconeogenesis) occurs during periods of reduced feeding allowing induction of gluconeogenesis and maintenance of blood glucose levels.

It is found in the cytoplasm. It localises to the nucleus. Its function is as follows. Transcriptional repressor which forms a core component of the circadian clock. The circadian clock, an internal time-keeping system, regulates various physiological processes through the generation of approximately 24 hour circadian rhythms in gene expression, which are translated into rhythms in metabolism and behavior. It is derived from the Latin roots 'circa' (about) and 'diem' (day) and acts as an important regulator of a wide array of physiological functions including metabolism, sleep, body temperature, blood pressure, endocrine, immune, cardiovascular, and renal function. Consists of two major components: the central clock, residing in the suprachiasmatic nucleus (SCN) of the brain, and the peripheral clocks that are present in nearly every tissue and organ system. Both the central and peripheral clocks can be reset by environmental cues, also known as Zeitgebers (German for 'timegivers'). The predominant Zeitgeber for the central clock is light, which is sensed by retina and signals directly to the SCN. The central clock entrains the peripheral clocks through neuronal and hormonal signals, body temperature and feeding-related cues, aligning all clocks with the external light/dark cycle. Circadian rhythms allow an organism to achieve temporal homeostasis with its environment at the molecular level by regulating gene expression to create a peak of protein expression once every 24 hours to control when a particular physiological process is most active with respect to the solar day. Transcription and translation of core clock components (CLOCK, NPAS2, BMAL1, BMAL2, PER1, PER2, PER3, CRY1 and CRY2) plays a critical role in rhythm generation, whereas delays imposed by post-translational modifications (PTMs) are important for determining the period (tau) of the rhythms (tau refers to the period of a rhythm and is the length, in time, of one complete cycle). A diurnal rhythm is synchronized with the day/night cycle, while the ultradian and infradian rhythms have a period shorter and longer than 24 hours, respectively. Disruptions in the circadian rhythms contribute to the pathology of cardiovascular diseases, cancer, metabolic syndromes and aging. A transcription/translation feedback loop (TTFL) forms the core of the molecular circadian clock mechanism. Transcription factors, CLOCK or NPAS2 and BMAL1 or BMAL2, form the positive limb of the feedback loop, act in the form of a heterodimer and activate the transcription of core clock genes and clock-controlled genes (involved in key metabolic processes), harboring E-box elements (5'-CACGTG-3') within their promoters. The core clock genes: PER1/2/3 and CRY1/2 which are transcriptional repressors form the negative limb of the feedback loop and interact with the CLOCK|NPAS2-BMAL1|BMAL2 heterodimer inhibiting its activity and thereby negatively regulating their own expression. This heterodimer also activates nuclear receptors NR1D1/2 and RORA/B/G, which form a second feedback loop and which activate and repress BMAL1 transcription, respectively. CRY1 and CRY2 have redundant functions but also differential and selective contributions at least in defining the pace of the SCN circadian clock and its circadian transcriptional outputs. More potent transcriptional repressor in cerebellum and liver than CRY2, though more effective in lengthening the period of the SCN oscillator. On its side, CRY2 seems to play a critical role in tuning SCN circadian period by opposing the action of CRY1. With CRY2, is dispensable for circadian rhythm generation but necessary for the development of intercellular networks for rhythm synchrony. Capable of translocating circadian clock core proteins such as PER proteins to the nucleus. Interacts with CLOCK-BMAL1 independently of PER proteins and is found at CLOCK-BMAL1-bound sites, suggesting that CRY may act as a molecular gatekeeper to maintain CLOCK-BMAL1 in a poised and repressed state until the proper time for transcriptional activation. Represses the CLOCK-BMAL1 induced transcription of BHLHE40/DEC1, ATF4, MTA1, KLF10 and NAMPT. May repress circadian target genes expression in collaboration with HDAC1 and HDAC2 through histone deacetylation. Mediates the clock-control activation of ATR and modulates ATR-mediated DNA damage checkpoint. In liver, mediates circadian regulation of cAMP signaling and gluconeogenesis by binding to membrane-coupled G proteins and blocking glucagon-mediated increases in intracellular cAMP concentrations and CREB1 phosphorylation. Inhibits hepatic gluconeogenesis by decreasing nuclear FOXO1 levels that down-regulates gluconeogenic gene expression. Besides its role in the maintenance of the circadian clock, is also involved in the regulation of other processes. Represses glucocorticoid receptor NR3C1/GR-induced transcriptional activity by binding to glucocorticoid response elements (GREs). Plays a key role in glucose and lipid metabolism modulation, in part, through the transcriptional regulation of genes involved in these pathways, such as LEP or ACSL4. Represses PPARD and its target genes in the skeletal muscle and limits exercise capacity. Plays an essential role in the generation of circadian rhythms in the retina. Represses the transcriptional activity of NR1I2. The protein is Cryptochrome-1 (Cry1) of Rattus norvegicus (Rat).